We begin with the raw amino-acid sequence, 467 residues long: F-box only protein 6 (467 aa).

One can recognise an F-box domain in the interval 114 to 163 (QEIWQEFPQDLFEDVVSRLPMATFFQFRAVCRKWNALIDSDSFSRCFTEL). Kelch repeat units lie at residues 163 to 211 (LPQT…MASA), 252 to 305 (GMTL…NFKS), and 406 to 456 (CLGN…IACG).

This Arabidopsis thaliana (Mouse-ear cress) protein is F-box only protein 6 (FBX6).